The chain runs to 307 residues: MVNTHVNLPGLDLKNPVMPASGTFGFGDVPAAQKFDLNDLGAMVIKTTTPHATTGNPQPQIAILEDGVLNSVGLTNPGVDQVISEKLTKLRHQYPDLPIMASVGGDSEDDYVEVAKKLSASGLVNALEINVSCPNVAQGGMSFGVHAGVVEELTKKIKMAVALPIYVKLTPNVTDIVEIAKAAESGGADGISMINTLLGMRIDIKTRKPLLGHNMGGLSGEAVKPIAIRMISQVRQVTQLPIIGMGGISTAQDVIEFILAGANAVAVGSAHFEDELAAKHIVEELPAELEKLGVEDINDLVGQVKFN.

FMN contacts are provided by residues serine 21 and 46 to 47; that span reads KT. Substrate-binding positions include lysine 46, 70–74, and asparagine 130; that span reads NSVGL. Residue asparagine 130 participates in FMN binding. Cysteine 133 acts as the Nucleophile in catalysis. 2 residues coordinate FMN: lysine 168 and isoleucine 194. 195–196 is a substrate binding site; that stretch reads NT. FMN-binding positions include glycine 220, 246–247, and 268–269; these read GG and GS.

This sequence belongs to the dihydroorotate dehydrogenase family. Type 1 subfamily. As to quaternary structure, homodimer. FMN is required as a cofactor.

It is found in the cytoplasm. It catalyses the reaction (S)-dihydroorotate + fumarate = orotate + succinate. The protein operates within pyrimidine metabolism; UMP biosynthesis via de novo pathway. Catalyzes the conversion of dihydroorotate to orotate with fumarate as the electron acceptor. This is Dihydroorotate dehydrogenase A (fumarate) (pyrD) from Lactobacillus helveticus (strain DPC 4571).